Here is a 70-residue protein sequence, read N- to C-terminus: Large ribosomal subunit protein bL31 (70 aa).

Residues C16, C18, C37, and C40 each coordinate Zn(2+).

It belongs to the bacterial ribosomal protein bL31 family. Type A subfamily. As to quaternary structure, part of the 50S ribosomal subunit. The cofactor is Zn(2+).

In terms of biological role, binds the 23S rRNA. The sequence is that of Large ribosomal subunit protein bL31 from Shewanella sediminis (strain HAW-EB3).